The chain runs to 190 residues: Protein PLANT CADMIUM RESISTANCE 8 (190 aa).

The tract at residues 1-31 is disordered; the sequence is MGRVTTPSEEDSNNGLPVQQPGTPNQRTRVP. Over residues 13–28 the composition is skewed to polar residues; the sequence is NNGLPVQQPGTPNQRT. Threonine 23 is subject to Phosphothreonine. Residues 94-113 traverse the membrane as a helical segment; the sequence is LGTFMYLLMMPALCSHWVMG.

The protein belongs to the cornifelin family.

The protein resides in the cell membrane. May be involved in heavy metals transport. The polypeptide is Protein PLANT CADMIUM RESISTANCE 8 (PCR8) (Arabidopsis thaliana (Mouse-ear cress)).